The sequence spans 237 residues: Uridylate kinase (237 aa).

ATP is bound at residue 12–15 (KLSG). The involved in allosteric activation by GTP stretch occupies residues 20–25 (GDEGFG). A UMP-binding site is contributed by Gly-54. ATP contacts are provided by Gly-55 and Arg-59. UMP contacts are provided by residues Asp-74 and 135–142 (TGSPFFTT). Thr-162, Tyr-168, and Asp-171 together coordinate ATP.

Belongs to the UMP kinase family. In terms of assembly, homohexamer.

It is found in the cytoplasm. The catalysed reaction is UMP + ATP = UDP + ADP. Its pathway is pyrimidine metabolism; CTP biosynthesis via de novo pathway; UDP from UMP (UMPK route): step 1/1. Allosterically activated by GTP. Inhibited by UTP. Catalyzes the reversible phosphorylation of UMP to UDP. The chain is Uridylate kinase from Haemophilus ducreyi (strain 35000HP / ATCC 700724).